The following is a 456-amino-acid chain: Exodeoxyribonuclease 7 large subunit (456 aa).

It belongs to the XseA family. Heterooligomer composed of large and small subunits.

The protein localises to the cytoplasm. It catalyses the reaction Exonucleolytic cleavage in either 5'- to 3'- or 3'- to 5'-direction to yield nucleoside 5'-phosphates.. Bidirectionally degrades single-stranded DNA into large acid-insoluble oligonucleotides, which are then degraded further into small acid-soluble oligonucleotides. This chain is Exodeoxyribonuclease 7 large subunit, found in Shigella boydii serotype 4 (strain Sb227).